The following is a 603-amino-acid chain: Elongation factor 4 (603 aa).

The 183-residue stretch at 6–188 (KYVRNFSIIA…DIVKNVPAPI (183 aa)) folds into the tr-type G domain. Residues 18–23 (DHGKST) and 135–138 (NKID) contribute to the GTP site.

It belongs to the TRAFAC class translation factor GTPase superfamily. Classic translation factor GTPase family. LepA subfamily.

The protein resides in the cell membrane. It catalyses the reaction GTP + H2O = GDP + phosphate + H(+). In terms of biological role, required for accurate and efficient protein synthesis under certain stress conditions. May act as a fidelity factor of the translation reaction, by catalyzing a one-codon backward translocation of tRNAs on improperly translocated ribosomes. Back-translocation proceeds from a post-translocation (POST) complex to a pre-translocation (PRE) complex, thus giving elongation factor G a second chance to translocate the tRNAs correctly. Binds to ribosomes in a GTP-dependent manner. The sequence is that of Elongation factor 4 from Finegoldia magna (strain ATCC 29328 / DSM 20472 / WAL 2508) (Peptostreptococcus magnus).